The following is a 684-amino-acid chain: Glycine--tRNA ligase beta subunit (684 aa).

Belongs to the class-II aminoacyl-tRNA synthetase family. As to quaternary structure, tetramer of two alpha and two beta subunits.

It is found in the cytoplasm. The enzyme catalyses tRNA(Gly) + glycine + ATP = glycyl-tRNA(Gly) + AMP + diphosphate. The polypeptide is Glycine--tRNA ligase beta subunit (Pseudomonas aeruginosa (strain UCBPP-PA14)).